A 319-amino-acid polypeptide reads, in one-letter code: Phenoxybenzoate dioxygenase subunit beta (319 aa).

The 103-residue stretch at 7–109 (MAPVSLRIHA…DGPSNHFALD (103 aa)) folds into the FAD-binding FR-type domain. Residue 113–223 (PHAVFIAGGI…PARVHLEYFA (111 aa)) participates in NAD(+) binding. The 2Fe-2S ferredoxin-type domain occupies 234 to 319 (FVVHLARSGR…SKTAELTLDL (86 aa)). The [2Fe-2S] cluster site is built by cysteine 268, cysteine 273, cysteine 276, and cysteine 306.

The protein belongs to the PDR/VanB family. This dioxygenase system consists of two proteins: the alpha subunit (PobA) and a subunit (PobB) that acts as a ferredoxin and a ferredoxin reductase. The cofactor is FMN.

It participates in aromatic compound metabolism; carboxydiphenyl ether degradation. Functionally, degrades exclusively diarylether compounds having carboxyl groups in the 3- or 4-position. Yields a hemiacetal that spontaneously hydrolyzes to phenol and protocatechuate. The protein is Phenoxybenzoate dioxygenase subunit beta (pobB) of Ectopseudomonas oleovorans (Pseudomonas oleovorans).